The following is an 824-amino-acid chain: Leucine--tRNA ligase (824 aa).

The 'HIGH' region signature appears at 42–52 (PYPSGKIHMGH). A 'KMSKS' region motif is present at residues 581-585 (KMSKS). Lysine 584 lines the ATP pocket.

It belongs to the class-I aminoacyl-tRNA synthetase family.

It localises to the cytoplasm. It carries out the reaction tRNA(Leu) + L-leucine + ATP = L-leucyl-tRNA(Leu) + AMP + diphosphate. The polypeptide is Leucine--tRNA ligase (Citrifermentans bemidjiense (strain ATCC BAA-1014 / DSM 16622 / JCM 12645 / Bem) (Geobacter bemidjiensis)).